Reading from the N-terminus, the 76-residue chain is Alpha/kappa-conotoxin pl14a (76 aa).

The signal sequence occupies residues 1–24 (MPSVRSVTCCCLLWMMFSVQLVTP). Residues 25 to 39 (GSPGTAQLSGHRTAR) constitute a propeptide that is removed on maturation. Disulfide bonds link C46-C61 and C50-C63. R64 carries the arginine amide modification. The propeptide occupies 65 to 76 (GKRDAVSSSMAV).

It belongs to the conotoxin J superfamily. As to expression, expressed by the venom duct.

The protein resides in the secreted. Functionally, highly inhibits both nicotinic acetylcholine receptors (neuronal (IC(50)=8.7 uM for alpha-3/beta-4) and muscular (IC(50)=0.54 uM for alpha-1-beta-1-epsilon-delta (CHRNA1-CHRNB1-CHRND-CHRNE)) subtypes) and the voltage-gated potassium channel Kv1.6/KCNA6 subtype (IC(50)=1.59 uM). The protein is Alpha/kappa-conotoxin pl14a of Conus planorbis (Planorbis cone).